Reading from the N-terminus, the 1053-residue chain is Putative ABC transporter C family member 15 (1053 aa).

One can recognise an ABC transmembrane type-1 1 domain in the interval 1–180 (MSVDVQRITD…LPDLLSALVQ (180 aa)). Transmembrane regions (helical) follow at residues 11-31 (FIWYVNSIWMLPIQIFSAIYI), 36-56 (LGLGALAALVTTLMVMACNYP), 125-145 (FILWGAPSLISVVTFVTCMLM), and 151-171 (AGAVLSALATFQMLQSPIFGL). The 224-residue stretch at 214–437 (VEIENGAFSW…NIGFEVLTQC (224 aa)) folds into the ABC transporter 1 domain. 249 to 256 (GAVGSGKS) contacts ATP. 5 helical membrane passes run 481 to 503 (LLVPFIILAQSCFQMLQIASNYW), 523 to 543 (ILLVYALLAAGSSLCVLARTI), 595 to 615 (MAVKLGWCAFSIIQIVGTIFV), 714 to 734 (LSHFVFAFSLVLLVTLPEGVI), and 738 to 758 (IAGLGVTYGLSLNVLQATVIW). One can recognise an ABC transmembrane type-1 2 domain in the interval 483–765 (VPFIILAQSC…VIWNICNAEN (283 aa)). An ABC transporter 2 domain is found at 804–1036 (FRDLQVRYAE…EDSFFSKLIK (233 aa)). Residue 836 to 843 (GRTGSGKS) participates in ATP binding.

It belongs to the ABC transporter superfamily. ABCC family. Conjugate transporter (TC 3.A.1.208) subfamily.

It is found in the membrane. The catalysed reaction is ATP + H2O + xenobioticSide 1 = ADP + phosphate + xenobioticSide 2.. Pump for glutathione S-conjugates. The chain is Putative ABC transporter C family member 15 (ABCC15) from Arabidopsis thaliana (Mouse-ear cress).